A 79-amino-acid chain; its full sequence is RNA-binding protein KhpA (79 aa).

The region spanning G30–R79 is the KH domain.

It belongs to the KhpA RNA-binding protein family.

The protein localises to the cytoplasm. It localises to the nucleoid. Its function is as follows. A probable RNA-binding protein. This Streptomyces coelicolor (strain ATCC BAA-471 / A3(2) / M145) protein is RNA-binding protein KhpA.